Here is a 591-residue protein sequence, read N- to C-terminus: V-type ATP synthase alpha chain (591 aa).

231 to 238 (GPFGSGKT) provides a ligand contact to ATP.

The protein belongs to the ATPase alpha/beta chains family.

The enzyme catalyses ATP + H2O + 4 H(+)(in) = ADP + phosphate + 5 H(+)(out). Functionally, produces ATP from ADP in the presence of a proton gradient across the membrane. The V-type alpha chain is a catalytic subunit. This chain is V-type ATP synthase alpha chain, found in Clostridium novyi (strain NT).